Here is a 514-residue protein sequence, read N- to C-terminus: Ribonuclease Y (514 aa).

Residues 2–22 (EDLIVAIVVGAFSSAISIFVV) traverse the membrane as a helical segment. One can recognise a KH domain in the interval 204-268 (LINNIPLNDE…VATKTIRELL (65 aa)). The HD domain occupies 330-423 (ALAHTLEVAH…VCAADALSAA (94 aa)).

The protein belongs to the RNase Y family.

It is found in the cell membrane. Functionally, endoribonuclease that initiates mRNA decay. This is Ribonuclease Y from Aliarcobacter butzleri (strain RM4018) (Arcobacter butzleri).